Here is a 200-residue protein sequence, read N- to C-terminus: Glutathione S-transferase 1-1 (200 aa).

In terms of domain architecture, GST N-terminal spans 1–73; it reads GSSPCRSVIM…YLVEKYGKTD (73 aa). Glutathione contacts are provided by residues Ser2, 43–45, and 57–59; these read HTI and ESR. Positions 79 to 200 constitute a GST C-terminal domain; that stretch reads CPKKRAVINQ…AGCLEFKKFF (122 aa).

This sequence belongs to the GST superfamily. Theta family. Homodimer.

The catalysed reaction is RX + glutathione = an S-substituted glutathione + a halide anion + H(+). It carries out the reaction 1,1,1-trichloro-2,2-bis(4-chlorophenyl)ethane = 1,1-dichloro-2,2-bis(4-chlorophenyl)ethylene + chloride + H(+). Conjugation of reduced glutathione to a wide number of exogenous and endogenous hydrophobic electrophiles. Has DDT dehydrochlorinase activity. This is Glutathione S-transferase 1-1 (GstD1) from Drosophila mauritiana (Fruit fly).